Reading from the N-terminus, the 86-residue chain is Small ribosomal subunit protein bS20 (86 aa).

Belongs to the bacterial ribosomal protein bS20 family.

Its function is as follows. Binds directly to 16S ribosomal RNA. This chain is Small ribosomal subunit protein bS20, found in Rhodococcus erythropolis (strain PR4 / NBRC 100887).